The sequence spans 246 residues: NADH-quinone oxidoreductase subunit C (246 aa).

Belongs to the complex I 30 kDa subunit family. NDH-1 is composed of 14 different subunits. Subunits NuoB, C, D, E, F, and G constitute the peripheral sector of the complex.

It is found in the cell inner membrane. The enzyme catalyses a quinone + NADH + 5 H(+)(in) = a quinol + NAD(+) + 4 H(+)(out). Its function is as follows. NDH-1 shuttles electrons from NADH, via FMN and iron-sulfur (Fe-S) centers, to quinones in the respiratory chain. The immediate electron acceptor for the enzyme in this species is believed to be ubiquinone. Couples the redox reaction to proton translocation (for every two electrons transferred, four hydrogen ions are translocated across the cytoplasmic membrane), and thus conserves the redox energy in a proton gradient. This chain is NADH-quinone oxidoreductase subunit C, found in Halorhodospira halophila (strain DSM 244 / SL1) (Ectothiorhodospira halophila (strain DSM 244 / SL1)).